A 245-amino-acid polypeptide reads, in one-letter code: Exosome complex component RRP41 (245 aa).

A2 carries the post-translational modification N-acetylalanine.

This sequence belongs to the RNase PH family. As to quaternary structure, component of the RNA exosome core complex (Exo-9), composed of EXOSC1, EXOSC2, EXOSC3, EXOSC4, EXOSC5, EXOSC6, EXOSC7, EXOSC8 and EXOSC9; within the complex interacts with EXOSC2, EXOSC7 and EXOSC9. The catalytically inactive RNA exosome core complex (Exo-9) associates with the catalytic subunit EXOSC10/RRP6. Exo-9 may associate with DIS3 to form the nucleolar exosome complex, or DIS3L to form the cytoplasmic exosome complex. Exo-9 is formed by a hexameric base ring consisting of the heterodimers EXOSC4-EXOSC9, EXOSC5-EXOSC8 and EXOSC6-EXOSC7, and a cap ring consisting of EXOSC1, EXOSC2 and EXOSC3. The RNA exosome complex associates with cofactors C1D/RRP47, MPHOSPH6/MPP6 and MTREX/MTR4. Interacts with DDX60. Interacts with DIS3; the interaction is direct.

It is found in the cytoplasm. The protein localises to the nucleus. Its subcellular location is the nucleolus. The protein resides in the nucleoplasm. Non-catalytic component of the RNA exosome complex which has 3'-&gt;5' exoribonuclease activity and participates in a multitude of cellular RNA processing and degradation events. In the nucleus, the RNA exosome complex is involved in proper maturation of stable RNA species such as rRNA, snRNA and snoRNA, in the elimination of RNA processing by-products and non-coding 'pervasive' transcripts, such as antisense RNA species and promoter-upstream transcripts (PROMPTs), and of mRNAs with processing defects, thereby limiting or excluding their export to the cytoplasm. The RNA exosome may be involved in Ig class switch recombination (CSR) and/or Ig variable region somatic hypermutation (SHM) by targeting AICDA deamination activity to transcribed dsDNA substrates. In the cytoplasm, the RNA exosome complex is involved in general mRNA turnover and specifically degrades inherently unstable mRNAs containing AU-rich elements (AREs) within their 3' untranslated regions, and in RNA surveillance pathways, preventing translation of aberrant mRNAs. It seems to be involved in degradation of histone mRNA. The catalytic inactive RNA exosome core complex of 9 subunits (Exo-9) is proposed to play a pivotal role in the binding and presentation of RNA for ribonucleolysis, and to serve as a scaffold for the association with catalytic subunits and accessory proteins or complexes. EXOSC4 binds to ARE-containing RNAs. In Mus musculus (Mouse), this protein is Exosome complex component RRP41 (Exosc4).